The following is a 234-amino-acid chain: Ribosomal RNA small subunit methyltransferase G (234 aa).

Gly-85, Phe-90, and Arg-155 together coordinate S-adenosyl-L-methionine.

The protein belongs to the methyltransferase superfamily. RNA methyltransferase RsmG family.

It is found in the cytoplasm. The enzyme catalyses guanosine(527) in 16S rRNA + S-adenosyl-L-methionine = N(7)-methylguanosine(527) in 16S rRNA + S-adenosyl-L-homocysteine. Specifically methylates the N7 position of guanine in position 527 of 16S rRNA. This Rhodopseudomonas palustris (strain BisB18) protein is Ribosomal RNA small subunit methyltransferase G.